The primary structure comprises 57 residues: UPF0337 protein SAV_1088 (57 aa).

Composition is skewed to basic and acidic residues over residues 1-15 (MAGD…EQAK) and 36-57 (QAEK…VFKH). Residues 1-57 (MAGDQKAKAKMEQAKGKAKAAAGRAVGNERMAAEGQAEKSKGDARQAKEKTKDVFKH) form a disordered region.

This sequence belongs to the UPF0337 (CsbD) family.

The chain is UPF0337 protein SAV_1088 from Streptomyces avermitilis (strain ATCC 31267 / DSM 46492 / JCM 5070 / NBRC 14893 / NCIMB 12804 / NRRL 8165 / MA-4680).